The sequence spans 71 residues: Small ribosomal subunit protein bS21 (71 aa).

This sequence belongs to the bacterial ribosomal protein bS21 family.

The chain is Small ribosomal subunit protein bS21 from Buchnera aphidicola subsp. Schizaphis graminum (strain Sg).